A 53-amino-acid chain; its full sequence is Sec-independent protein translocase protein TatA (53 aa).

The helical transmembrane segment at Met1–Ala21 threads the bilayer.

Belongs to the TatA/E family. The Tat system comprises two distinct complexes: a TatABC complex, containing multiple copies of TatA, TatB and TatC subunits, and a separate TatA complex, containing only TatA subunits. Substrates initially bind to the TatABC complex, which probably triggers association of the separate TatA complex to form the active translocon.

Its subcellular location is the cell inner membrane. Functionally, part of the twin-arginine translocation (Tat) system that transports large folded proteins containing a characteristic twin-arginine motif in their signal peptide across membranes. TatA could form the protein-conducting channel of the Tat system. The polypeptide is Sec-independent protein translocase protein TatA (Rickettsia rickettsii (strain Iowa)).